Consider the following 340-residue polypeptide: Methionine import ATP-binding protein MetN (340 aa).

Residues 5–243 enclose the ABC transporter domain; the sequence is IEFRGVTKSF…PQTTTARRFV (239 aa). 40–47 is an ATP binding site; the sequence is GYSGAGKS.

The protein belongs to the ABC transporter superfamily. Methionine importer (TC 3.A.1.24) family. In terms of assembly, the complex is composed of two ATP-binding proteins (MetN), two transmembrane proteins (MetI) and a solute-binding protein (MetQ).

It localises to the cell membrane. It carries out the reaction L-methionine(out) + ATP + H2O = L-methionine(in) + ADP + phosphate + H(+). It catalyses the reaction D-methionine(out) + ATP + H2O = D-methionine(in) + ADP + phosphate + H(+). Its function is as follows. Part of the ABC transporter complex MetNIQ involved in methionine import. Responsible for energy coupling to the transport system. The polypeptide is Methionine import ATP-binding protein MetN (Leifsonia xyli subsp. xyli (strain CTCB07)).